The chain runs to 257 residues: Snake venom serine protease 3 (257 aa).

Residues 1–18 (MVLIRVLANLLILQLSYA) form the signal peptide. Residues 19-24 (QKSSEL) constitute a propeptide that is removed on maturation. Residues 25–248 (VIGGDECNIN…YTDWIQNIIA (224 aa)) form the Peptidase S1 domain. 6 disulfide bridges follow: Cys31-Cys163, Cys50-Cys66, Cys98-Cys255, Cys142-Cys209, Cys174-Cys188, and Cys199-Cys224. N-linked (GlcNAc...) asparagine glycosylation occurs at Asn44. Catalysis depends on His65, which acts as the Charge relay system. N-linked (GlcNAc...) asparagine glycosylation is present at Asn103. The Charge relay system role is filled by Asp110. Asn117 and Asn154 each carry an N-linked (GlcNAc...) asparagine glycan. The active-site Charge relay system is the Ser203. Asn250 carries N-linked (GlcNAc...) asparagine glycosylation.

The protein belongs to the peptidase S1 family. Snake venom subfamily. As to quaternary structure, monomer. As to expression, expressed by the venom gland.

It localises to the secreted. Snake venom serine protease that may act in the hemostasis system of the prey. In Protobothrops flavoviridis (Habu), this protein is Snake venom serine protease 3 (TLF3).